We begin with the raw amino-acid sequence, 313 residues long: Ribosomal RNA small subunit methyltransferase H (313 aa).

Residues 35–37, aspartate 55, phenylalanine 79, aspartate 101, and glutamine 108 contribute to the S-adenosyl-L-methionine site; that span reads GGH.

The protein belongs to the methyltransferase superfamily. RsmH family.

It localises to the cytoplasm. The catalysed reaction is cytidine(1402) in 16S rRNA + S-adenosyl-L-methionine = N(4)-methylcytidine(1402) in 16S rRNA + S-adenosyl-L-homocysteine + H(+). Functionally, specifically methylates the N4 position of cytidine in position 1402 (C1402) of 16S rRNA. This chain is Ribosomal RNA small subunit methyltransferase H, found in Salmonella agona (strain SL483).